A 355-amino-acid polypeptide reads, in one-letter code: 3-isopropylmalate dehydrogenase (355 aa).

Residues R90, R100, R128, and D222 each contribute to the substrate site. Residues D222, D246, and D250 each coordinate Mg(2+). 280–292 lines the NAD(+) pocket; sequence GSAPDIAGKGIAN.

It belongs to the isocitrate and isopropylmalate dehydrogenases family. LeuB type 1 subfamily. Homodimer. It depends on Mg(2+) as a cofactor. Mn(2+) serves as cofactor.

It localises to the cytoplasm. It catalyses the reaction (2R,3S)-3-isopropylmalate + NAD(+) = 4-methyl-2-oxopentanoate + CO2 + NADH. The protein operates within amino-acid biosynthesis; L-leucine biosynthesis; L-leucine from 3-methyl-2-oxobutanoate: step 3/4. Functionally, catalyzes the oxidation of 3-carboxy-2-hydroxy-4-methylpentanoate (3-isopropylmalate) to 3-carboxy-4-methyl-2-oxopentanoate. The product decarboxylates to 4-methyl-2 oxopentanoate. The sequence is that of 3-isopropylmalate dehydrogenase from Burkholderia mallei (strain ATCC 23344).